Reading from the N-terminus, the 334-residue chain is 6-phosphogluconolactonase (334 aa).

Belongs to the cycloisomerase 2 family.

It carries out the reaction 6-phospho-D-glucono-1,5-lactone + H2O = 6-phospho-D-gluconate + H(+). Its pathway is carbohydrate degradation; pentose phosphate pathway; D-ribulose 5-phosphate from D-glucose 6-phosphate (oxidative stage): step 2/3. In terms of biological role, catalyzes the hydrolysis of 6-phosphogluconolactone to 6-phosphogluconate. The sequence is that of 6-phosphogluconolactonase from Yersinia pseudotuberculosis serotype IB (strain PB1/+).